The following is a 157-amino-acid chain: Crossover junction endodeoxyribonuclease RuvC (157 aa).

Active-site residues include aspartate 7, glutamate 67, and aspartate 140. Mg(2+) is bound by residues aspartate 7, glutamate 67, and aspartate 140.

Belongs to the RuvC family. As to quaternary structure, homodimer which binds Holliday junction (HJ) DNA. The HJ becomes 2-fold symmetrical on binding to RuvC with unstacked arms; it has a different conformation from HJ DNA in complex with RuvA. In the full resolvosome a probable DNA-RuvA(4)-RuvB(12)-RuvC(2) complex forms which resolves the HJ. The cofactor is Mg(2+).

It is found in the cytoplasm. It carries out the reaction Endonucleolytic cleavage at a junction such as a reciprocal single-stranded crossover between two homologous DNA duplexes (Holliday junction).. Its function is as follows. The RuvA-RuvB-RuvC complex processes Holliday junction (HJ) DNA during genetic recombination and DNA repair. Endonuclease that resolves HJ intermediates. Cleaves cruciform DNA by making single-stranded nicks across the HJ at symmetrical positions within the homologous arms, yielding a 5'-phosphate and a 3'-hydroxyl group; requires a central core of homology in the junction. The consensus cleavage sequence is 5'-(A/T)TT(C/G)-3'. Cleavage occurs on the 3'-side of the TT dinucleotide at the point of strand exchange. HJ branch migration catalyzed by RuvA-RuvB allows RuvC to scan DNA until it finds its consensus sequence, where it cleaves and resolves the cruciform DNA. The chain is Crossover junction endodeoxyribonuclease RuvC from Rickettsia typhi (strain ATCC VR-144 / Wilmington).